The chain runs to 380 residues: Cytochrome b (380 aa).

The next 4 membrane-spanning stretches (helical) occupy residues 34 to 54, 78 to 99, 114 to 134, and 179 to 199; these read FGSLLGICLATQILTGLLLAA, WLIRNLHANGASFFFICIYLHI, WNTGVILLLTLMATAFVGYVL, and FFTLHFLLPFMIMGLTLIHLT. His-84 and His-98 together coordinate heme b. Residues His-183 and His-197 each coordinate heme b. Residue His-202 participates in a ubiquinone binding. Transmembrane regions (helical) follow at residues 227 to 247, 289 to 309, 321 to 341, and 348 to 368; these read LKDILGFTLMLLPLMTLALFS, LGGVLALAASVLILFLAPLLH, FSQLLFWTLAANLLILTWVGS, and FIIIGQLASLTYFTILLILFP.

Belongs to the cytochrome b family. The cytochrome bc1 complex contains 11 subunits: 3 respiratory subunits (MT-CYB, CYC1 and UQCRFS1), 2 core proteins (UQCRC1 and UQCRC2) and 6 low-molecular weight proteins (UQCRH/QCR6, UQCRB/QCR7, UQCRQ/QCR8, UQCR10/QCR9, UQCR11/QCR10 and a cleavage product of UQCRFS1). This cytochrome bc1 complex then forms a dimer. The cofactor is heme b.

Its subcellular location is the mitochondrion inner membrane. Functionally, component of the ubiquinol-cytochrome c reductase complex (complex III or cytochrome b-c1 complex) that is part of the mitochondrial respiratory chain. The b-c1 complex mediates electron transfer from ubiquinol to cytochrome c. Contributes to the generation of a proton gradient across the mitochondrial membrane that is then used for ATP synthesis. This Antigone antigone (Sarus crane) protein is Cytochrome b (MT-CYB).